The chain runs to 274 residues: Diaminopimelate epimerase (274 aa).

2 residues coordinate substrate: N11 and N65. C74 (proton donor) is an active-site residue. Residues 75–76 (GN), N158, N191, and 209–210 (ER) contribute to the substrate site. The active-site Proton acceptor is C218. A substrate-binding site is contributed by 219–220 (GT).

The protein belongs to the diaminopimelate epimerase family. In terms of assembly, homodimer.

The protein localises to the cytoplasm. The catalysed reaction is (2S,6S)-2,6-diaminopimelate = meso-2,6-diaminopimelate. It functions in the pathway amino-acid biosynthesis; L-lysine biosynthesis via DAP pathway; DL-2,6-diaminopimelate from LL-2,6-diaminopimelate: step 1/1. Catalyzes the stereoinversion of LL-2,6-diaminopimelate (L,L-DAP) to meso-diaminopimelate (meso-DAP), a precursor of L-lysine and an essential component of the bacterial peptidoglycan. The protein is Diaminopimelate epimerase of Carboxydothermus hydrogenoformans (strain ATCC BAA-161 / DSM 6008 / Z-2901).